The chain runs to 438 residues: Aspartate--tRNA(Asp) ligase (438 aa).

E170 contributes to the L-aspartate binding site. Residues 192–195 (QLYK) form an aspartate region. R214 provides a ligand contact to L-aspartate. ATP-binding positions include 214–216 (RAE), 222–224 (RHL), and E361. Residues E361 and S364 each coordinate Mg(2+). L-aspartate is bound by residues S364 and R368. 409 to 412 (GAER) provides a ligand contact to ATP.

This sequence belongs to the class-II aminoacyl-tRNA synthetase family. Type 2 subfamily. As to quaternary structure, homodimer. Mg(2+) is required as a cofactor.

It localises to the cytoplasm. The catalysed reaction is tRNA(Asp) + L-aspartate + ATP = L-aspartyl-tRNA(Asp) + AMP + diphosphate. Functionally, catalyzes the attachment of L-aspartate to tRNA(Asp) in a two-step reaction: L-aspartate is first activated by ATP to form Asp-AMP and then transferred to the acceptor end of tRNA(Asp). This Pyrococcus abyssi (strain GE5 / Orsay) protein is Aspartate--tRNA(Asp) ligase.